The following is a 196-amino-acid chain: MLQEHFFLSEDVITLAQQLLGHKLITTHEGLITSGYIVETEAYRGPDDKACHAYNYRKTQRNRAMYLKGGSAYLYRCYGMHHLLNVVTGPEDIPHAVLIRAILPDQGKELMIQRRQWRDKPPHLLTNGPGKVCQALGISLENNRQRLNTPALYISKEKISGTLTATARIGIDYAQEYRDVPWRFLLSPEDSGKVLS.

Belongs to the DNA glycosylase MPG family.

The polypeptide is Putative 3-methyladenine DNA glycosylase (Chlamydia pneumoniae (Chlamydophila pneumoniae)).